The primary structure comprises 299 residues: GTPase Era (299 aa).

In terms of domain architecture, Era-type G spans K5–E172. The G1 stretch occupies residues G13–S20. G13 to S20 contributes to the GTP binding site. Positions Q39 to N43 are G2. The segment at D60–G63 is G3. GTP is bound by residues D60–I64 and N122–D125. Residues N122 to D125 are G4. Residues I151–A153 are G5. Residues T203–R280 enclose the KH type-2 domain.

The protein belongs to the TRAFAC class TrmE-Era-EngA-EngB-Septin-like GTPase superfamily. Era GTPase family. As to quaternary structure, monomer.

It is found in the cytoplasm. The protein resides in the cell membrane. An essential GTPase that binds both GDP and GTP, with rapid nucleotide exchange. Plays a role in 16S rRNA processing and 30S ribosomal subunit biogenesis and possibly also in cell cycle regulation and energy metabolism. This Staphylococcus aureus (strain NCTC 8325 / PS 47) protein is GTPase Era.